We begin with the raw amino-acid sequence, 201 residues long: Akirin (201 aa).

A disordered region spans residues 1 to 133; that stretch reads MACATLKRAL…PRRPDSPQNL (133 aa). The Nuclear localization signal signature appears at 20 to 25; that stretch reads PKRRRC. Serine 39 and serine 41 each carry phosphoserine. Composition is skewed to polar residues over residues 44–57 and 65–75; these read GPSTSAGLPHTPSN and EPSPFSESSLA. Residue serine 67 is modified to Phosphoserine. Over residues 112–122 the composition is skewed to low complexity; sequence SESSGSEMGPE. A phosphoserine mark is found at serine 123 and serine 129.

The protein belongs to the akirin family. As to quaternary structure, interacts with dmap1. Interacts with bap60 and rel; interaction is immune stimulation-dependent; activates selected rel target gene promoters. Interacts with bap55; interaction is immune stimulation-dependent. Interacts with twi. Polyubiquitinated via 'Lys-63'-linked ubiquitin by Hyd, promoting interaction with rel. In terms of tissue distribution, ubiquitous.

It localises to the nucleus. In terms of biological role, molecular adapter that acts as a bridge between a variety of multiprotein complexes, and which is required for embryonic development and for normal innate immune response. Acts as a regulator of embryonic myogenesis by bridging Twist (twi) with the SWI/SNF-like Brahma complex, promoting expression of twi-regulated genes during myogenesis. Effector of immune deficiency pathway (Imd) by acting either downstream of, or at the level of, the NF-kappa-B factor Relish (Rel). Acts by bridging the NF-kappa-B factor Rel and the Brahma complex through bap60 interaction, leading to activation a subset of NF-kappa-B factor Relish (Rel) effector genes. Not part of the Toll pathway. Required for the formation of the heart by promoting expression ot tinman (tin). The sequence is that of Akirin from Drosophila melanogaster (Fruit fly).